Reading from the N-terminus, the 244-residue chain is Small ribosomal subunit protein eS4 (244 aa).

Residues 1 to 14 show a composition bias toward basic residues; the sequence is MANKGPRKHLKRLP. Positions 1 to 36 are disordered; sequence MANKGPRKHLKRLPAPKNWQISRKTNKYTTRPSAGP. The segment covering 19–32 has biased composition (polar residues); it reads WQISRKTNKYTTRP. One can recognise an S4 RNA-binding domain in the interval 43-106; sequence LPLLLVLRDL…NESFLVVLDE (64 aa).

Belongs to the eukaryotic ribosomal protein eS4 family.

This is Small ribosomal subunit protein eS4 from Methanococcus aeolicus (strain ATCC BAA-1280 / DSM 17508 / OCM 812 / Nankai-3).